Here is a 484-residue protein sequence, read N- to C-terminus: F-box/LRR-repeat protein At3g59210 (484 aa).

Residues 6 to 54 (KDIINCLPDNLLCQILSNLSTKEAALTSLLSKRWRYLFALVPNLDFDVL) enclose the F-box domain. LRR repeat units follow at residues 144-170 (KIGPKDGPRVKLRNVCLPKLKTLNLDS), 172-197 (VFEEGKIGFAKLLSGCPVLEELSLLN), 205-234 (SCSVSSKILKRLTLYCAHSSRNPKSVSFDT), 303-334 (TLYLSYDTLETLNLCCQVIPVFNNLTHLTIES), and 335-360 (HPELGWESLPNLLKSCPNLGTLVFQG).

The protein is F-box/LRR-repeat protein At3g59210 of Arabidopsis thaliana (Mouse-ear cress).